Here is a 471-residue protein sequence, read N- to C-terminus: Zinc finger protein 385B (471 aa).

Positions 1–93 are required for induction of apoptosis; that stretch reads MNMANFLRGF…TGSTCHTTTL (93 aa). The Matrin-type 1 zinc-finger motif lies at 34–64; the sequence is SFCEVCNIQLNSAAQAQVHSNGKSHRKRVKQ. 2 disordered regions span residues 50–92 and 175–275; these read QVHS…HTTT and HYKG…TVVE. Over residues 76 to 92 the composition is skewed to low complexity; the sequence is ASPSSNSSTGSTCHTTT. An interaction with p53/TP53 region spans residues 94-471; that stretch reads PALVRTPTLM…TPASILFAPY (378 aa). The Matrin-type 2 zinc finger occupies 157-187; that stretch reads ISCNVCQLRFNSDSQAEAHYKGSKHAKKVKA. The span at 206–220 shows a compositional bias: polar residues; sequence ANPSCSITPITGNNS. Residues 230–250 show a composition bias toward low complexity; it reads KASSSSQPSSSESGSFLLKSG. Residues 260-269 show a composition bias toward polar residues; that stretch reads TSPSKSTNGA. The Matrin-type 3 zinc finger occupies 282–316; the sequence is KKLLYCSLCKVAVNSLSQLEAHNTGSKHKTMVEAR. The segment at 318–340 is disordered; sequence GAGPIKSYPRPGSRLKMQNGSKG. A Matrin-type 4 zinc finger spans residues 348–378; the sequence is FHCEICDVHVNSEIQLKQHISSRRHKDRVAG.

As to quaternary structure, interacts with p53/TP53; the interaction is direct. As to expression, detected in germinal center of lymph node (at protein level). Expressed in spleen, lymph node and tonsil.

The protein localises to the nucleus. In terms of biological role, may play a role in p53/TP53-mediated apoptosis. The protein is Zinc finger protein 385B (ZNF385B) of Homo sapiens (Human).